An 84-amino-acid chain; its full sequence is Small ribosomal subunit protein uS17 (84 aa).

The protein belongs to the universal ribosomal protein uS17 family. As to quaternary structure, part of the 30S ribosomal subunit.

Its function is as follows. One of the primary rRNA binding proteins, it binds specifically to the 5'-end of 16S ribosomal RNA. The sequence is that of Small ribosomal subunit protein uS17 from Proteus mirabilis (strain HI4320).